The sequence spans 1333 residues: Elongator complex protein 1 (1333 aa).

A phosphoserine mark is found at serine 805, serine 1172, and serine 1175. Residues valine 886 to glutamate 1333 form a mediates dimerization region. Positions serine 1175–lysine 1209 are disordered. Residues alanine 1192–glutamate 1210 are required for binding to tRNA. Residues serine 1195 to serine 1207 are compositionally biased toward basic residues.

The protein belongs to the ELP1/IKA1 family. In terms of assembly, homodimer; dimerization promotes ELP1 stability and elongator complex formation. Component of the elongator complex which consists of ELP1, ELP2, ELP3, ELP4, ELP5 and ELP6. Interacts preferentially with MAP3K14/NIK followed by IKK-alpha and IKK-beta. Post-translationally, phosphorylated. As to expression, in the testis, expression is restricted to germ cells during spermatogenesis with no expression detected in somatic cells such as Sertoli cells or Leydig cells (at protein level). In the ovary, expressed in oocytes of primary, secondary and antral follicles (at protein level). Widely expressed in adult tissues with highest levels in brain and also expressed at all embryonic stages.

Its subcellular location is the cytoplasm. It is found in the nucleus. The protein operates within tRNA modification; 5-methoxycarbonylmethyl-2-thiouridine-tRNA biosynthesis. Component of the elongator complex which is required for multiple tRNA modifications, including mcm5U (5-methoxycarbonylmethyl uridine), mcm5s2U (5-methoxycarbonylmethyl-2-thiouridine), and ncm5U (5-carbamoylmethyl uridine). The elongator complex catalyzes the formation of carboxymethyluridine in the wobble base at position 34 in tRNAs. Regulates the migration and branching of projection neurons in the developing cerebral cortex, through a process depending on alpha-tubulin acetylation. ELP1 binds to tRNA, mediating interaction of the elongator complex with tRNA. May act as a scaffold protein that assembles active IKK-MAP3K14 complexes (IKKA, IKKB and MAP3K14/NIK). The sequence is that of Elongator complex protein 1 (Elp1) from Mus musculus (Mouse).